The following is a 586-amino-acid chain: Probable lysosomal cobalamin transporter (586 aa).

The next 9 helical transmembrane spans lie at 10–30, 47–67, 96–116, 147–167, 191–211, 315–335, 378–398, 420–440, and 509–529; these read IWIA…VTTF, VVSL…IALV, IVYY…IPFA, SGFI…PAAG, ALTF…VLYT, LVGG…MLIT, IIMA…LATV, ILIA…SIAM, and VFGA…LIVL. N-linked (GlcNAc...) asparagine glycosylation occurs at N540.

The protein belongs to the LIMR family. LMBRD1 subfamily.

Its subcellular location is the lysosome membrane. Its function is as follows. Probable lysosomal cobalamin transporter. Required to export cobalamin from lysosomes allowing its conversion to cofactors. The polypeptide is Probable lysosomal cobalamin transporter (Pyricularia oryzae (strain 70-15 / ATCC MYA-4617 / FGSC 8958) (Rice blast fungus)).